The primary structure comprises 96 residues: Exodeoxyribonuclease 7 small subunit (96 aa).

The disordered stretch occupies residues 73 to 96 (RAPEQSAANDVSAPGSAEEHDHGR).

Belongs to the XseB family. Heterooligomer composed of large and small subunits.

The protein resides in the cytoplasm. It catalyses the reaction Exonucleolytic cleavage in either 5'- to 3'- or 3'- to 5'-direction to yield nucleoside 5'-phosphates.. Bidirectionally degrades single-stranded DNA into large acid-insoluble oligonucleotides, which are then degraded further into small acid-soluble oligonucleotides. This chain is Exodeoxyribonuclease 7 small subunit, found in Acidothermus cellulolyticus (strain ATCC 43068 / DSM 8971 / 11B).